The chain runs to 195 residues: MARRNEERGDRRNREEERDSEIVEKLVHINRVAATVKGGRRFSFAALMVVGDQKGRVGFGHGKAREVPEAIRKATEEAKKSMIRVPLRESRTLHHDGAGRWGAGKVMVRAAPPGTGVIAGGPMRAVLETLGVQDVVGKSVGSSNPYNMVRATFEALKAQSSPRQVAAKRGKKVSDVIGRRADGASAAQPAADAEG.

The S5 DRBM domain occupies 22–85 (IVEKLVHINR…EEAKKSMIRV (64 aa)). Residues 164–195 (QVAAKRGKKVSDVIGRRADGASAAQPAADAEG) are disordered. Positions 172 to 182 (KVSDVIGRRAD) are enriched in basic and acidic residues. The span at 183 to 195 (GASAAQPAADAEG) shows a compositional bias: low complexity.

This sequence belongs to the universal ribosomal protein uS5 family. In terms of assembly, part of the 30S ribosomal subunit. Contacts proteins S4 and S8.

Functionally, with S4 and S12 plays an important role in translational accuracy. In terms of biological role, located at the back of the 30S subunit body where it stabilizes the conformation of the head with respect to the body. The sequence is that of Small ribosomal subunit protein uS5 from Phenylobacterium zucineum (strain HLK1).